A 527-amino-acid polypeptide reads, in one-letter code: Estrogen receptor beta (527 aa).

The interval 1 to 145 (MDVKNSPSSL…SPSSKRDAHF (145 aa)) is modulating. Phosphoserine; by MAPK is present on residues Ser-84 and Ser-102. NR C4-type zinc fingers lie at residues 146-166 (CAVC…CEGC) and 182-206 (CPAT…LRKC). The segment at residues 146-211 (CAVCSDYASG…RLRKCYEVGM (66 aa)) is a DNA-binding region (nuclear receptor). Residues 261-495 (SPEQLVLTLL…DLLLEMLNAH (235 aa)) form the NR LBD domain.

This sequence belongs to the nuclear hormone receptor family. NR3 subfamily. As to quaternary structure, binds DNA as a homodimer. Can form a heterodimer with ESR1. Interacts with NCOA1, NCOA3, NCOA5 and NCOA6 coactivators, leading to a strong increase of transcription of target genes. Interacts with UBE1C and AKAP13. Interacts with DNTTIP2. Interacts with CCDC62 in the presence of estradiol/E2; this interaction seems to enhance the transcription of target genes. Interacts with DNAAF4. Interacts with PRMT2. Interacts with CCAR2 (via N-terminus) in a ligand-independent manner. Interacts with RBM39, in the presence of estradiol (E2). Interacts with STUB1/CHIP. Phosphorylation at Ser-84 and Ser-102 recruits NCOA1. In terms of tissue distribution, present in granulosa cells of antral follicles in various stages of follicular growth.

The protein localises to the nucleus. Functionally, nuclear hormone receptor. Binds estrogens with an affinity similar to that of ESR1ESR1/ER-alpha, and activates expression of reporter genes containing estrogen response elements (ERE) in an estrogen-dependent manner. In Bos taurus (Bovine), this protein is Estrogen receptor beta (ESR2).